Consider the following 478-residue polypeptide: Flotillin-like protein 1 (478 aa).

Residue cysteine 35 is the site of S-palmitoyl cysteine attachment. Residues 235 to 277 (ENQREAEVAEANSELAKKKAAWTMAAQVAELEAAKAVALREAE) adopt a coiled-coil conformation.

Belongs to the band 7/mec-2 family. Flotillin subfamily. In terms of processing, may be palmitoylated. In terms of tissue distribution, expressed in all plant organs. Primarily expressed in vascular tissues. No change in spatial expression in root upon inoculation. Expression limited to the nodule vascular tissue.

The protein resides in the cell membrane. Its subcellular location is the membrane. The protein localises to the caveola. In terms of biological role, may act as a scaffolding protein within caveolar membranes, functionally participating in formation of caveolae or caveolae-like vesicles. May be involved in nodule formation. The chain is Flotillin-like protein 1 (FLOT1) from Medicago truncatula (Barrel medic).